The chain runs to 262 residues: T-cell surface glycoprotein YE1/48 (262 aa).

Over 1–44 the chain is Cytoplasmic; sequence MSEQEVTYSMVRFHKSAGLQKQVRPEETKGPREAGYRRCSFHWK. Residues 45–66 traverse the membrane as a helical; Signal-anchor for type II membrane protein segment; sequence FIVIALGIFCFLLLVAVSVLAI. Residues 67 to 262 are Extracellular-facing; that stretch reads KIFQYDQQKN…CGKRLDKFPH (196 aa). Asparagine 86, asparagine 103, and asparagine 123 each carry an N-linked (GlcNAc...) asparagine glycan. The Cell attachment site signature appears at 137-139; that stretch reads RGD. Residues 138–257 form the C-type lectin domain; the sequence is GDKVYWFCYG…VFICICGKRL (120 aa). 4 disulfides stabilise this stretch: cysteine 145-cysteine 150, cysteine 163-cysteine 251, cysteine 167-cysteine 253, and cysteine 232-cysteine 245.

As to quaternary structure, homodimer; disulfide-linked. High, in T-lymphoma lines, very low in normal lymphocytes.

Its subcellular location is the membrane. Functionally, receptor on natural killer (NK) cells for H-2d alleles. Inhibits the activity of NK cells thus preventing cell lysis. This chain is T-cell surface glycoprotein YE1/48 (Klra1), found in Mus musculus (Mouse).